Here is a 187-residue protein sequence, read N- to C-terminus: Hypoxanthine/guanine phosphoribosyltransferase (187 aa).

The protein belongs to the purine/pyrimidine phosphoribosyltransferase family. Archaeal HPRT subfamily. Homodimer.

Its subcellular location is the cytoplasm. It carries out the reaction IMP + diphosphate = hypoxanthine + 5-phospho-alpha-D-ribose 1-diphosphate. The enzyme catalyses GMP + diphosphate = guanine + 5-phospho-alpha-D-ribose 1-diphosphate. The protein operates within purine metabolism; IMP biosynthesis via salvage pathway; IMP from hypoxanthine: step 1/1. In terms of biological role, catalyzes a salvage reaction resulting in the formation of IMP that is energically less costly than de novo synthesis. The polypeptide is Hypoxanthine/guanine phosphoribosyltransferase (Ferroglobus placidus (strain DSM 10642 / AEDII12DO)).